Consider the following 314-residue polypeptide: MRVIYMGTPEFAVAPLHSLIGNQYDVVAVFTQPDRPKGRGKKLQSTPVKELALAHGLMLYQPIKLRESSVVEIIKSLEPDVIVVVAYGQILSKEILEIPTYGCINVHASLLPKYRGAAPIHRAIIDGEKKTGVTTMYMDVGLDTGDMLLKKEVLIGADETAGELRDRLMALGADTLIKTLNQVQRGTLVGEKQNDLESSYAAMLDKGLGQINWNQSAEAIRNLIRGTIPWPMAYTTYLGNRVKIWKSRIEESEVSGKPGEILKVEKSGIFVKTGQGTLVIERIQFSGKKPLDVREYLAGNTIEKGVLLGEEDGN.

Ser-109–Pro-112 serves as a coordination point for (6S)-5,6,7,8-tetrahydrofolate.

It belongs to the Fmt family.

It catalyses the reaction L-methionyl-tRNA(fMet) + (6R)-10-formyltetrahydrofolate = N-formyl-L-methionyl-tRNA(fMet) + (6S)-5,6,7,8-tetrahydrofolate + H(+). Its function is as follows. Attaches a formyl group to the free amino group of methionyl-tRNA(fMet). The formyl group appears to play a dual role in the initiator identity of N-formylmethionyl-tRNA by promoting its recognition by IF2 and preventing the misappropriation of this tRNA by the elongation apparatus. The protein is Methionyl-tRNA formyltransferase of Alkaliphilus metalliredigens (strain QYMF).